The sequence spans 120 residues: MFLLYEYDIFWAFLIISSFIPILAFLISGILAPISKGPEKLSSYESGIEPIGDAWLQFRIRYYMFALIFVVFDVETVFLYPWAMSFDVLGVSVFIEAFIFVLILIVGSVYAWRKGALEWS.

3 helical membrane passes run 9 to 29 (IFWAFLIISSFIPILAFLISG), 64 to 84 (MFALIFVVFDVETVFLYPWAM), and 88 to 108 (VLGVSVFIEAFIFVLILIVGS).

This sequence belongs to the complex I subunit 3 family. In terms of assembly, NDH is composed of at least 16 different subunits, 5 of which are encoded in the nucleus.

The protein resides in the plastid. It localises to the chloroplast thylakoid membrane. The catalysed reaction is a plastoquinone + NADH + (n+1) H(+)(in) = a plastoquinol + NAD(+) + n H(+)(out). It carries out the reaction a plastoquinone + NADPH + (n+1) H(+)(in) = a plastoquinol + NADP(+) + n H(+)(out). Functionally, NDH shuttles electrons from NAD(P)H:plastoquinone, via FMN and iron-sulfur (Fe-S) centers, to quinones in the photosynthetic chain and possibly in a chloroplast respiratory chain. The immediate electron acceptor for the enzyme in this species is believed to be plastoquinone. Couples the redox reaction to proton translocation, and thus conserves the redox energy in a proton gradient. In Glycine max (Soybean), this protein is NAD(P)H-quinone oxidoreductase subunit 3, chloroplastic.